The primary structure comprises 546 residues: Chaperonin GroEL 3 (546 aa).

ATP-binding positions include 30–33 (TLGP), Lys51, 87–91 (DGTTT), Gly415, and Asp496.

Belongs to the chaperonin (HSP60) family. Forms a cylinder of 14 subunits composed of two heptameric rings stacked back-to-back. Interacts with the co-chaperonin GroES.

It localises to the cytoplasm. The catalysed reaction is ATP + H2O + a folded polypeptide = ADP + phosphate + an unfolded polypeptide.. In terms of biological role, together with its co-chaperonin GroES, plays an essential role in assisting protein folding. The GroEL-GroES system forms a nano-cage that allows encapsulation of the non-native substrate proteins and provides a physical environment optimized to promote and accelerate protein folding. The sequence is that of Chaperonin GroEL 3 from Bradyrhizobium diazoefficiens (strain JCM 10833 / BCRC 13528 / IAM 13628 / NBRC 14792 / USDA 110).